A 203-amino-acid chain; its full sequence is Peptide deformylase (203 aa).

Fe cation contacts are provided by C130 and H173. E174 is an active-site residue. A Fe cation-binding site is contributed by H177.

The protein belongs to the polypeptide deformylase family. Fe(2+) serves as cofactor.

The enzyme catalyses N-terminal N-formyl-L-methionyl-[peptide] + H2O = N-terminal L-methionyl-[peptide] + formate. In terms of biological role, removes the formyl group from the N-terminal Met of newly synthesized proteins. Requires at least a dipeptide for an efficient rate of reaction. N-terminal L-methionine is a prerequisite for activity but the enzyme has broad specificity at other positions. This chain is Peptide deformylase, found in Streptococcus pneumoniae serotype 4 (strain ATCC BAA-334 / TIGR4).